The chain runs to 147 residues: FAD synthase (147 aa).

Residues 13 to 14 (TF), 18 to 21 (HEGH), Asp-100, and Phe-127 contribute to the ATP site.

It belongs to the archaeal FAD synthase family. In terms of assembly, homodimer. Requires a divalent metal cation as cofactor.

It catalyses the reaction FMN + ATP + H(+) = FAD + diphosphate. It participates in cofactor biosynthesis; FAD biosynthesis; FAD from FMN: step 1/1. Its function is as follows. Catalyzes the transfer of the AMP portion of ATP to flavin mononucleotide (FMN) to produce flavin adenine dinucleotide (FAD) coenzyme. The chain is FAD synthase from Korarchaeum cryptofilum (strain OPF8).